The chain runs to 228 residues: MQSALDRRGLGPVAGVDEAGRGACAGPLVVAACALKPGDGRRFEGLTDSKVLSPAERERLYDVIQAKALSLSVIVIPADEVDALGIHVANLEGMRRAVAQLSVAPGYVLTDGFRVPGLGAPSVAVVKGDLVAACVAAASVLAKVTRDRIMTGLHEQFPVYGFDEHKGYCTSDHTARLTEHGPCEEHRWCYANVVAAAQLHGMRSPRTVSSKPGLFDAFEGDVVDNEQL.

In terms of domain architecture, RNase H type-2 spans 11–202 (GPVAGVDEAG…VVAAAQLHGM (192 aa)). Positions 17, 18, and 111 each coordinate a divalent metal cation.

Belongs to the RNase HII family. It depends on Mn(2+) as a cofactor. The cofactor is Mg(2+).

It localises to the cytoplasm. It carries out the reaction Endonucleolytic cleavage to 5'-phosphomonoester.. In terms of biological role, endonuclease that specifically degrades the RNA of RNA-DNA hybrids. The chain is Ribonuclease HII from Saccharopolyspora erythraea (strain ATCC 11635 / DSM 40517 / JCM 4748 / NBRC 13426 / NCIMB 8594 / NRRL 2338).